The chain runs to 371 residues: MEKQYLTFISFCFSITICGFLIVSWLARSIIRNGIRTLTWRKETKRKKKNQEDENKMSLLDLPDLTLDCILEKLSPSELCAMTSVCSELRDKCVSDHLWEKHMETKWGRLMGDAAIQEWKSHVATIMRCLTSSSSSSRKSKPNWSSRFVANLKPFAWLSSNHGCENRGSSSYLAPIDSVMYWYSNLENGKFWFPAQVYNRENGHVGFMMSCYDAKIRYDFKTDTFQARYSAHGRRAAEEKVTWQRLRPSQDDTKSRDLHVSDCLHGLRPGDHFEIQWRRTKEFPYGWWFGIVGHLQNCDGVQNCRCDSDENVVMEFRQFRPESPWRRTVIKRKDHRETGNEENGFYGGVKKLGTEEEISTWKQLWPSQALE.

The region spanning 56–102 is the F-box domain; it reads KMSLLDLPDLTLDCILEKLSPSELCAMTSVCSELRDKCVSDHLWEKH.

The protein is F-box protein At2g41170 of Arabidopsis thaliana (Mouse-ear cress).